The primary structure comprises 130 residues: Biotin carboxyl carrier protein (130 aa).

The disordered stretch occupies residues 20-64 (EISESSVPAATPITPTTENTRAASDQKQQSQTPSPAATASAANTM). Polar residues predominate over residues 23-46 (ESSVPAATPITPTTENTRAASDQK). Positions 47–64 (QQSQTPSPAATASAANTM) are enriched in low complexity. The Biotinyl-binding domain maps to 55-130 (AATASAANTM…NAGDNLITIA (76 aa)). Lys-96 bears the N6-biotinyllysine mark.

The polypeptide is Biotin carboxyl carrier protein (bcc) (Streptococcus mutans serotype c (strain ATCC 700610 / UA159)).